Consider the following 250-residue polypeptide: NAD-dependent protein deacetylase 2 (250 aa).

One can recognise a Deacetylase sirtuin-type domain in the interval 4-250 (MDSKNLFKKA…LRNIWNLIKS (247 aa)). The NAD(+) site is built by Ala29, Thr33, Phe40, Arg41, Gln107, Ile109, Asp110, and His125. Phe40 serves as a coordination point for nicotinamide. Positions 109 and 110 each coordinate nicotinamide. Catalysis depends on His125, which acts as the Proton acceptor. Positions 133, 136, 158, and 161 each coordinate Zn(2+). Ser198, Ser199, and Asn219 together coordinate NAD(+).

Belongs to the sirtuin family. Class U subfamily. The cofactor is Zn(2+).

It is found in the cytoplasm. The enzyme catalyses N(6)-acetyl-L-lysyl-[protein] + NAD(+) + H2O = 2''-O-acetyl-ADP-D-ribose + nicotinamide + L-lysyl-[protein]. Its function is as follows. NAD-dependent protein deacetylase which modulates the activities of several enzymes which are inactive in their acetylated form. The chain is NAD-dependent protein deacetylase 2 from Caldanaerobacter subterraneus subsp. tengcongensis (strain DSM 15242 / JCM 11007 / NBRC 100824 / MB4) (Thermoanaerobacter tengcongensis).